A 131-amino-acid chain; its full sequence is Ribosome-binding factor A (131 aa).

The protein belongs to the RbfA family. In terms of assembly, monomer. Binds 30S ribosomal subunits, but not 50S ribosomal subunits or 70S ribosomes.

The protein localises to the cytoplasm. Functionally, one of several proteins that assist in the late maturation steps of the functional core of the 30S ribosomal subunit. Associates with free 30S ribosomal subunits (but not with 30S subunits that are part of 70S ribosomes or polysomes). Required for efficient processing of 16S rRNA. May interact with the 5'-terminal helix region of 16S rRNA. The protein is Ribosome-binding factor A of Pseudomonas fluorescens (strain SBW25).